The following is a 51-amino-acid chain: Large ribosomal subunit protein eL39 (51 aa).

A disordered region spans residues 32 to 51; that stretch reads KRRVTRSPTRRHWRRVKLKA.

It belongs to the eukaryotic ribosomal protein eL39 family.

This is Large ribosomal subunit protein eL39 from Pyrobaculum arsenaticum (strain DSM 13514 / JCM 11321 / PZ6).